The primary structure comprises 140 residues: Granulocyte-macrophage colony-stimulating factor (140 aa).

Positions Met1–Cys17 are cleaved as a signal peptide. The O-linked (GalNAc...) serine glycan is linked to Ser24. An O-linked (GalNAc...) threonine glycan is attached at Thr27. 3 N-linked (GlcNAc...) asparagine glycosylation sites follow: Asn45, Asn55, and Asn87. Intrachain disulfides connect Cys72–Cys114 and Cys106–Cys139.

It belongs to the GM-CSF family. Monomer. The signaling GM-CSF receptor complex is a dodecamer of two head-to-head hexamers of two alpha, two beta, and two ligand subunits.

It localises to the secreted. Cytokine that stimulates the growth and differentiation of hematopoietic precursor cells from various lineages, including granulocytes, macrophages, eosinophils and erythrocytes. The sequence is that of Granulocyte-macrophage colony-stimulating factor (CSF2) from Cavia porcellus (Guinea pig).